A 68-amino-acid chain; its full sequence is MVYYPELLVWVSQEPFAYKEMEGGLIKGRLPVPKEVNRKKMEETGAASLTPPGSREFTSPATSYLHPF.

The segment at 42-68 is disordered; sequence EETGAASLTPPGSREFTSPATSYLHPF.

As to quaternary structure, interacts with FLNA. Interacts with the latency-associated peptides (LAP) of TGFB1 and TGFB2; the interaction results in a decrease in TGFB autoinduction. In terms of processing, phosphorylated on Ser-59. Phosphorylation decreases stability and activity. In terms of tissue distribution, expressed in brain and fetal lung.

It is found in the cytoplasm. In terms of biological role, may have roles in cellular differentiation. Ectopic expression induces differentiation of fibroblast into myofibroblast and myofibroblast ameboid migration. Increases retinoic-acid regulation of lipid-droplet biogenesis. May also have neural functions. Promotes axonal regeneration and augments motility of gliomas. Down-regulates the expression of TGFB1 and TGFB2 but not of TGFB3. May play a role in the regulation of alveolar generation. The chain is Neuronal regeneration-related protein (Nrep) from Mus musculus (Mouse).